The following is a 273-amino-acid chain: Progestin and adipoQ receptor family member 4 (273 aa).

6 consecutive transmembrane segments (helical) span residues 52–72, 79–99, 115–135, 147–167, 185–205, and 245–265; these read IYTHGLALLGFLVLVPMTMPW, GWLGGTHCVACLAPPAGSVLY, LLALDMCGVCLVNTLGALPII, PAALVGYTVLSGVAGWRALTA, LLVFGARGVGLGSGAPGSLPC, and LLSVGSILQLHAGVVPDLLWA.

Belongs to the ADIPOR family. Interacts with CERS2 and CERS5; the interaction regulates CERS2 and CERS5 stabilities and activities and is inhibited in presence of ceramides. As to expression, relatively widely expressed in a range of tissues. Expressed in subcutaneous white adipose tissue.

It localises to the golgi apparatus membrane. Its function is as follows. Plays a role in maintaining adipose tissue function through the regulation of ceramide levels. Mediates the stability of ceramide synthetases, CERS2 and CERS5, and their activities. In Homo sapiens (Human), this protein is Progestin and adipoQ receptor family member 4.